Consider the following 262-residue polypeptide: MTTKVAIIGSGNIGTDLMFKIQRLSQTLEVAALVGIDPESDGLQRAGRLGIPITADGVAGLLDIPGFDQISIVFDATSARAHVANAAALEPFGKQLVDLTPAAIGPYVVPAVNLEENLAARNVNMVTCGGQATIPMVAAVSHVAPVAYAEIVASIASRSAGPGTRANIDEFTETTSKAIEVVGGAHRGKAIIVLNPADPPLIMRDTILCLIGDADHDAIRDSVHRRVAEVSEYVPGYRLKQDVQITTVTDDVPLSTLGRVSQ.

Position 10–13 (10–13 (SGNI)) interacts with NAD(+). Residue cysteine 128 is the Acyl-thioester intermediate of the active site. Residue 159–167 (SAGPGTRAN) coordinates NAD(+).

This sequence belongs to the acetaldehyde dehydrogenase family.

It catalyses the reaction acetaldehyde + NAD(+) + CoA = acetyl-CoA + NADH + H(+). The protein is Acetaldehyde dehydrogenase 7 of Rhodococcus jostii (strain RHA1).